Consider the following 409-residue polypeptide: F-box/kelch-repeat protein At1g48625 (409 aa).

Positions 2 to 49 (ATMISNLPRDLMEEILSRVPLKSMRAVRLTCKNWHTLSITISESLAKM) constitute an F-box domain. 2 Kelch repeats span residues 169-218 (FIDY…LKGN) and 221-266 (WCAR…ILSC).

The sequence is that of F-box/kelch-repeat protein At1g48625 from Arabidopsis thaliana (Mouse-ear cress).